A 435-amino-acid polypeptide reads, in one-letter code: E3 ubiquitin-protein ligase RNFT1 (435 aa).

Positions 1–62 (MPLFLLSLPT…SSEDASTPQC (62 aa)) are disordered. A compositionally biased stretch (basic and acidic residues) spans 16-34 (GHERRQRPEAKTSGSEKKY). Residues 40-62 (ANRSQLHSPPGTGSSEDASTPQC) show a composition bias toward polar residues. 6 consecutive transmembrane segments (helical) span residues 158 to 178 (ILIL…LGIG), 203 to 223 (IQCA…YYTF), 233 to 253 (IFLN…IVGI), 256 to 276 (FILK…PSFI), 298 to 318 (TFVP…FGNV), and 323 to 343 (LGIL…FGHL). Residues 368 to 419 (CSDVDDICSICQAEFQKPILLICQHIFCEECMTLWFNREKTCPLCRTVISDH) are required for ubiquitin ligase activity and for protection against ER stress-induced cell death. An RING-type zinc finger spans residues 375 to 413 (CSICQAEFQKPILLICQHIFCEECMTLWFNREKTCPLCR).

Expressed at highest levels in testis, lower levels in heart, liver, lung, and kidney. Not detected in brain, ovary, and uterus. Down-regulated in testis from patients with maturation arrest (MA) or Sertoli cell-only syndrome (SCOS). Ubiquitously expressed with high expression in testis.

It localises to the endoplasmic reticulum membrane. It catalyses the reaction S-ubiquitinyl-[E2 ubiquitin-conjugating enzyme]-L-cysteine + [acceptor protein]-L-lysine = [E2 ubiquitin-conjugating enzyme]-L-cysteine + N(6)-ubiquitinyl-[acceptor protein]-L-lysine.. It participates in protein modification; protein ubiquitination. Functionally, E3 ubiquitin-protein ligase that acts in the endoplasmic reticulum (ER)-associated degradation (ERAD) pathway, which targets misfolded proteins that accumulate in the endoplasmic reticulum (ER) for ubiquitination and subsequent proteasome-mediated degradation. Protects cells from ER stress-induced apoptosis. The polypeptide is E3 ubiquitin-protein ligase RNFT1 (RNFT1) (Homo sapiens (Human)).